Reading from the N-terminus, the 344-residue chain is Arginine N-succinyltransferase (344 aa).

Residue leucine 125 coordinates succinyl-CoA. Histidine 229 serves as the catalytic Proton donor.

The protein belongs to the arginine N-succinyltransferase family.

The catalysed reaction is succinyl-CoA + L-arginine = N(2)-succinyl-L-arginine + CoA + H(+). The protein operates within amino-acid degradation; L-arginine degradation via AST pathway; L-glutamate and succinate from L-arginine: step 1/5. In terms of biological role, catalyzes the transfer of succinyl-CoA to arginine to produce N(2)-succinylarginine. The sequence is that of Arginine N-succinyltransferase from Enterobacter sp. (strain 638).